The sequence spans 134 residues: Outer membrane lipoprotein RcsF (134 aa).

The signal sequence occupies residues 1–15; it reads MRALPICLVALMLSG. The N-palmitoyl cysteine moiety is linked to residue Cys-16. The S-diacylglycerol cysteine moiety is linked to residue Cys-16. 2 disordered regions span residues 22–48 and 67–88; these read SPVE…RATP and GEVS…IPTA. Positions 72–82 are enriched in polar residues; that stretch reads DSCQASNQDSP. 2 cysteine pairs are disulfide-bonded: Cys-74/Cys-118 and Cys-109/Cys-124.

Belongs to the RcsF family.

The protein resides in the cell outer membrane. Functionally, essential component of the Rcs signaling system, which controls transcription of numerous genes. Plays a role in signal transduction from the cell surface to the histidine kinase RcsC. May detect outer membrane defects. This is Outer membrane lipoprotein RcsF from Escherichia coli O6:H1 (strain CFT073 / ATCC 700928 / UPEC).